The primary structure comprises 1082 residues: Mediator of RNA polymerase II transcription subunit 14 (1082 aa).

Disordered stretches follow at residues 1 to 80 (MTTT…APPP) and 319 to 343 (EATS…NLPL). Residue Thr-2 is modified to N-acetylthreonine. A Phosphoserine modification is found at Ser-7. Residues 13-28 (NEERLSNEMHALKNRS) show a composition bias toward basic and acidic residues. The segment covering 29–59 (EQNGQEQQGPVKNTQLHGPSATDPETTATQK) has biased composition (polar residues). A compositionally biased stretch (low complexity) spans 321–340 (TSTNGDSENNEENSSSNGNN). Position 1036 is a phosphothreonine (Thr-1036).

This sequence belongs to the Mediator complex subunit 14 family. As to quaternary structure, component of the Mediator complex, which is composed of at least 21 subunits that form three structurally distinct submodules. The Mediator head module contains MED6, MED8, MED11, SRB4/MED17, SRB5/MED18, ROX3/MED19, SRB2/MED20 and SRB6/MED22, the middle module contains MED1, MED4, NUT1/MED5, MED7, CSE2/MED9, NUT2/MED10, SRB7/MED21 and SOH1/MED31, and the tail module contains MED2, PGD1/MED3, RGR1/MED14, GAL11/MED15 and SIN4/MED16. The head and the middle modules interact directly with RNA polymerase II, whereas the elongated tail module interacts with gene-specific regulatory proteins.

It localises to the nucleus. Its function is as follows. Component of the Mediator complex, a coactivator involved in the regulated transcription of nearly all RNA polymerase II-dependent genes. Mediator functions as a bridge to convey information from gene-specific regulatory proteins to the basal RNA polymerase II transcription machinery. The Mediator complex, having a compact conformation in its free form, is recruited to promoters by direct interactions with regulatory proteins and serves for the assembly of a functional preinitiation complex with RNA polymerase II and the general transcription factors. The Mediator complex unfolds to an extended conformation and partially surrounds RNA polymerase II, specifically interacting with the unphosphorylated form of the C-terminal domain (CTD) of RNA polymerase II. The Mediator complex dissociates from the RNA polymerase II holoenzyme and stays at the promoter when transcriptional elongation begins. This chain is Mediator of RNA polymerase II transcription subunit 14 (RGR1), found in Saccharomyces cerevisiae (strain ATCC 204508 / S288c) (Baker's yeast).